We begin with the raw amino-acid sequence, 121 residues long: HTH-type transcriptional regulator MerD (121 aa).

Residues Ala3–Ala72 enclose the HTH merR-type domain. A DNA-binding region (H-T-H motif) is located at residues Val6–Leu25.

This chain is HTH-type transcriptional regulator MerD (merD), found in Serratia marcescens.